Here is a 262-residue protein sequence, read N- to C-terminus: Ribosomal RNA small subunit methyltransferase A (262 aa).

6 residues coordinate S-adenosyl-L-methionine: Asn-14, Leu-16, Gly-41, Glu-62, Asp-87, and Asn-109.

It belongs to the class I-like SAM-binding methyltransferase superfamily. rRNA adenine N(6)-methyltransferase family. RsmA subfamily.

Its subcellular location is the cytoplasm. It carries out the reaction adenosine(1518)/adenosine(1519) in 16S rRNA + 4 S-adenosyl-L-methionine = N(6)-dimethyladenosine(1518)/N(6)-dimethyladenosine(1519) in 16S rRNA + 4 S-adenosyl-L-homocysteine + 4 H(+). Specifically dimethylates two adjacent adenosines (A1518 and A1519) in the loop of a conserved hairpin near the 3'-end of 16S rRNA in the 30S particle. May play a critical role in biogenesis of 30S subunits. In Francisella tularensis subsp. holarctica (strain FTNF002-00 / FTA), this protein is Ribosomal RNA small subunit methyltransferase A.